A 129-amino-acid chain; its full sequence is Small ribosomal subunit protein uS12 (129 aa).

D89 carries the post-translational modification 3-methylthioaspartic acid. Residues 101-129 (TLDTSGVSDRKQSRSKYGAKQPKAVAAKK) are disordered.

This sequence belongs to the universal ribosomal protein uS12 family. In terms of assembly, part of the 30S ribosomal subunit. Contacts proteins S8 and S17. May interact with IF1 in the 30S initiation complex.

Its function is as follows. With S4 and S5 plays an important role in translational accuracy. Interacts with and stabilizes bases of the 16S rRNA that are involved in tRNA selection in the A site and with the mRNA backbone. Located at the interface of the 30S and 50S subunits, it traverses the body of the 30S subunit contacting proteins on the other side and probably holding the rRNA structure together. The combined cluster of proteins S8, S12 and S17 appears to hold together the shoulder and platform of the 30S subunit. This Chlorobium luteolum (strain DSM 273 / BCRC 81028 / 2530) (Pelodictyon luteolum) protein is Small ribosomal subunit protein uS12.